Consider the following 317-residue polypeptide: MDARADQIYNPYRVFTRAQWAKLRDDTPMTLNATEIAALRSMYDRLDLKEVEEIYLPLSRLLSIYVAATQQLYFAQRRFLGIVDRKMPYIIGVAGSVAVGKSTTARVLQALLARWSPRPKVDLITTDGFLYSNAMLERQGMMQKKGFPESYDLPRLLAFLSDIKAGRRRVRAPIYSHLTYDIVPNEYVTVDRPDILIVEGVNVLQTGRLPRDGKAVPVVSDFFDFSVYIDADEPVLREWYVQRFLALRDTAFHDPRSYFHRYAPLSDEEATATALAIWERTNLANLEDNILPTRPRATLIMKKGTDHVVETVALRRL.

95-102 (GSVAVGKS) is an ATP binding site.

Belongs to the prokaryotic pantothenate kinase family.

It is found in the cytoplasm. It carries out the reaction (R)-pantothenate + ATP = (R)-4'-phosphopantothenate + ADP + H(+). The protein operates within cofactor biosynthesis; coenzyme A biosynthesis; CoA from (R)-pantothenate: step 1/5. This is Pantothenate kinase from Rhodopseudomonas palustris (strain BisB18).